Consider the following 211-residue polypeptide: Glycerol-3-phosphate acyltransferase (211 aa).

The next 4 helical transmembrane spans lie at 5–25, 80–100, 112–132, and 138–158; these read ALGM…ILFC, PLYL…PVFF, FGAI…TWLL, and GYSS…VWWF.

Belongs to the PlsY family. As to quaternary structure, probably interacts with PlsX.

It is found in the cell inner membrane. It catalyses the reaction an acyl phosphate + sn-glycerol 3-phosphate = a 1-acyl-sn-glycero-3-phosphate + phosphate. It participates in lipid metabolism; phospholipid metabolism. Functionally, catalyzes the transfer of an acyl group from acyl-phosphate (acyl-PO(4)) to glycerol-3-phosphate (G3P) to form lysophosphatidic acid (LPA). This enzyme utilizes acyl-phosphate as fatty acyl donor, but not acyl-CoA or acyl-ACP. The protein is Glycerol-3-phosphate acyltransferase of Pectobacterium carotovorum subsp. carotovorum (strain PC1).